The sequence spans 248 residues: PACRG-like protein (248 aa).

Met1 is modified (N-acetylmethionine). Residues 1 to 72 form a disordered region; sequence MQRSECSGGV…NPKTINPFGE (72 aa). 2 stretches are compositionally biased toward polar residues: residues 14 to 29 and 36 to 45; these read NRAT…SSTQ and VQRSKSSSLT. Residue Ser47 is modified to Phosphoserine.

The sequence is that of PACRG-like protein (Pacrgl) from Mus musculus (Mouse).